A 423-amino-acid chain; its full sequence is Acyl-coenzyme A diphosphatase FITM2 (423 aa).

The disordered stretch occupies residues Met1–Ala47. Over Met1 to Lys75 the chain is Cytoplasmic. Residues Val76–Pro96 form a helical membrane-spanning segment. The Lumenal segment spans residues Lys97–Lys113. Residues Ile114–Ile134 form a helical membrane-spanning segment. Residues Thr135–His146 lie on the Cytoplasmic side of the membrane. The chain crosses the membrane as a helical span at residues Phe147–Val167. At Glu168 to Leu191 the chain is on the lumenal side. The helical transmembrane segment at Trp192–Ile212 threads the bilayer. His200 is a catalytic residue. The Cytoplasmic portion of the chain corresponds to Glu213–Thr270. A helical membrane pass occupies residues Leu271–Leu291. At Tyr292–Lys299 the chain is on the lumenal side. The active site involves His294. The chain crosses the membrane as a helical span at residues Val300–Thr320. The Cytoplasmic segment spans residues Pro321 to Ser423. Disordered regions lie at residues Phe344 to Gln381 and Ala400 to Ser423. Positions Ser351–Asn367 are enriched in low complexity. The span at Gln409–Ser423 shows a compositional bias: basic and acidic residues.

The protein belongs to the FIT family. FIT2 subfamily.

It localises to the endoplasmic reticulum membrane. The enzyme catalyses an acyl-CoA + H2O = an acyl-4'-phosphopantetheine + adenosine 3',5'-bisphosphate + 2 H(+). Its function is as follows. Fatty acyl-coenzyme A (CoA) diphosphatase that hydrolyzes fatty acyl-CoA to yield acyl-4'-phosphopantetheine and adenosine 3',5'-bisphosphate. Preferentially hydrolyzes unsaturated long-chain acyl-CoA substrates in the endoplasmic reticulum (ER) lumen. This catalytic activity is required for maintaining ER structure and for lipid droplets (LDs) biogenesis, which are lipid storage organelles involved in maintaining lipid and energy homeostasis. May directly bind to diacylglycerol (DAGs) and triacylglycerol, which is also important for LD biogenesis. May support directional budding of nacent LDs from the ER into the cytosol by reducing DAG levels at sites of LD formation. Plays a role in the regulation of cell morphology and cytoskeletal organization. Required for correct morphology of nociceptive multi-dendritic sensory neurons. Required for normal mechanical amplification in hearing. The protein is Acyl-coenzyme A diphosphatase FITM2 of Drosophila melanogaster (Fruit fly).